Reading from the N-terminus, the 93-residue chain is Cobalt transport protein CbiN (93 aa).

2 helical membrane-spanning segments follow: residues 5-25 (LMLL…NHGG) and 63-83 (LLFT…LGYC).

The protein belongs to the CbiN family. As to quaternary structure, forms an energy-coupling factor (ECF) transporter complex composed of an ATP-binding protein (A component, CbiO), a transmembrane protein (T component, CbiQ) and 2 possible substrate-capture proteins (S components, CbiM and CbiN) of unknown stoichimetry.

The protein resides in the cell inner membrane. Its pathway is cofactor biosynthesis; adenosylcobalamin biosynthesis. Part of the energy-coupling factor (ECF) transporter complex CbiMNOQ involved in cobalt import. In Salmonella choleraesuis (strain SC-B67), this protein is Cobalt transport protein CbiN.